The following is a 130-amino-acid chain: Cytochrome c oxidase subunit 13, mitochondrial (130 aa).

Residues 1–31 constitute a mitochondrion transit peptide; sequence MSMMNRNIGFLSRTLKTSVPKRAGLLSFRAY. The Mitochondrial matrix portion of the chain corresponds to 32–61; it reads SNEAKVNWLEEVQAEEEHAKRSSEFWKKVT. The chain crosses the membrane as a helical span at residues 62–80; the sequence is YYIGGPALILASANAYYIY. Residues 81–130 are Mitochondrial intermembrane-facing; that stretch reads CKHQEHAKHVEDTDPGYSFENLRFKKYPWGDGSKTLFWNDKVNHLKKDDE.

It belongs to the cytochrome c oxidase subunit 6A family. In terms of assembly, component of the cytochrome c oxidase (complex IV, CIV), a multisubunit enzyme composed of a catalytic core of 3 subunits and several supernumerary subunits. The complex exists as a monomer or a dimer and forms supercomplexes (SCs) in the inner mitochondrial membrane with ubiquinol-cytochrome c oxidoreductase (cytochrome b-c1 complex, complex III, CIII).

It localises to the mitochondrion inner membrane. Its pathway is energy metabolism; oxidative phosphorylation. In terms of biological role, component of the cytochrome c oxidase, the last enzyme in the mitochondrial electron transport chain which drives oxidative phosphorylation. The respiratory chain contains 3 multisubunit complexes succinate dehydrogenase (complex II, CII), ubiquinol-cytochrome c oxidoreductase (cytochrome b-c1 complex, complex III, CIII) and cytochrome c oxidase (complex IV, CIV), that cooperate to transfer electrons derived from NADH and succinate to molecular oxygen, creating an electrochemical gradient over the inner membrane that drives transmembrane transport and the ATP synthase. Cytochrome c oxidase is the component of the respiratory chain that catalyzes the reduction of oxygen to water. Electrons originating from reduced cytochrome c in the intermembrane space (IMS) are transferred via the dinuclear copper A center (CU(A)) of subunit 2 and heme A of subunit 1 to the active site in subunit 1, a binuclear center (BNC) formed by heme A3 and copper B (CU(B)). The BNC reduces molecular oxygen to 2 water molecules unsing 4 electrons from cytochrome c in the IMS and 4 protons from the mitochondrial matrix. The chain is Cytochrome c oxidase subunit 13, mitochondrial (cox13) from Schizosaccharomyces pombe (strain 972 / ATCC 24843) (Fission yeast).